The chain runs to 233 residues: Fibrillarin-like rRNA/tRNA 2'-O-methyltransferase (233 aa).

Residues 89-90 (TT), 108-109 (EF), 133-134 (DA), and 153-156 (DIAQ) contribute to the S-adenosyl-L-methionine site.

The protein belongs to the methyltransferase superfamily. Fibrillarin family. In terms of assembly, interacts with nop5. Component of box C/D small ribonucleoprotein (sRNP) particles that contain rpl7ae, FlpA and nop5, plus a guide RNA.

In terms of biological role, involved in pre-rRNA and tRNA processing. Utilizes the methyl donor S-adenosyl-L-methionine to catalyze the site-specific 2'-hydroxyl methylation of ribose moieties in rRNA and tRNA. Site specificity is provided by a guide RNA that base pairs with the substrate. Methylation occurs at a characteristic distance from the sequence involved in base pairing with the guide RNA. This Sulfurisphaera tokodaii (strain DSM 16993 / JCM 10545 / NBRC 100140 / 7) (Sulfolobus tokodaii) protein is Fibrillarin-like rRNA/tRNA 2'-O-methyltransferase.